Consider the following 479-residue polypeptide: GDP-fucose protein O-fucosyltransferase 3 (479 aa).

At Met-1–Lys-8 the chain is on the cytoplasmic side. Residues Leu-9 to Glu-31 form a helical; Signal-anchor for type II membrane protein membrane-spanning segment. The Lumenal portion of the chain corresponds to Leu-32 to Asp-479. N-linked (GlcNAc...) asparagine glycans are attached at residues Asn-110 and Asn-168. Residues Cys-389 and Cys-392 are joined by a disulfide bond.

This sequence belongs to the glycosyltransferase 10 family. In terms of tissue distribution, expressed in lung, digestive tract, gall bladder, placenta, kidney, uterus and brain. Not detected in spleen, heart, muscle, liver and pancreas.

The protein resides in the endoplasmic reticulum membrane. It is found in the golgi apparatus membrane. Its subcellular location is the golgi apparatus. The protein localises to the lysosome. It catalyses the reaction L-threonyl-[protein] + GDP-beta-L-fucose = 3-O-(alpha-L-fucosyl)-L-threonyl-[protein] + GDP + H(+). The catalysed reaction is L-seryl-[protein] + GDP-beta-L-fucose = 3-O-(alpha-L-fucosyl)-L-seryl-[protein] + GDP + H(+). It functions in the pathway protein modification; protein glycosylation. Functionally, protein O-fucosyltransferase that specifically catalyzes O-fucosylation of serine or threonine residues in EMI domains of target proteins, such as MMRN1, MMRN2 and EMID1. Attaches fucose through an O-glycosidic linkage. O-fucosylation of EMI domain-containing proteins may be required for facilitating protein folding and secretion. May also show alpha-(1,3)-fucosyltransferase activity toward the innermost N-acetyl glucosamine (GlcNAc) residue in biantennary N-glycan acceptors. However, this was tested with a library of synthetic substrates and this activity is unsure in vivo. May be involved in biosynthesis of Lewis X-carrying biantennary N-glycans that regulate neuron stem cell self-renewal during brain development. The polypeptide is GDP-fucose protein O-fucosyltransferase 3 (Homo sapiens (Human)).